The chain runs to 492 residues: Cysteine--tRNA ligase (492 aa).

Position 29 (C29) interacts with Zn(2+). Positions 31–41 (PTVYDYAHIGN) match the 'HIGH' region motif. Positions 222, 247, and 251 each coordinate Zn(2+). The 'KMSKS' region motif lies at 279–283 (KMSKS). Position 282 (K282) interacts with ATP.

This sequence belongs to the class-I aminoacyl-tRNA synthetase family. As to quaternary structure, monomer. It depends on Zn(2+) as a cofactor.

The protein localises to the cytoplasm. It catalyses the reaction tRNA(Cys) + L-cysteine + ATP = L-cysteinyl-tRNA(Cys) + AMP + diphosphate. The chain is Cysteine--tRNA ligase from Treponema denticola (strain ATCC 35405 / DSM 14222 / CIP 103919 / JCM 8153 / KCTC 15104).